A 185-amino-acid polypeptide reads, in one-letter code: Ribosome-recycling factor (185 aa).

This sequence belongs to the RRF family.

It is found in the cytoplasm. Its function is as follows. Responsible for the release of ribosomes from messenger RNA at the termination of protein biosynthesis. May increase the efficiency of translation by recycling ribosomes from one round of translation to another. This is Ribosome-recycling factor from Mycobacterium leprae (strain Br4923).